A 307-amino-acid chain; its full sequence is Hepatitis A virus cellular receptor 1 homolog (307 aa).

An N-terminal signal peptide occupies residues 1-21 (MVQLQVFISGLLLLLPGSVDS). Residues 22-124 (YEVVKGVVGH…WFNDQKMTFS (103 aa)) enclose the Ig-like V-type domain. The Extracellular portion of the chain corresponds to 22–235 (YEVVKGVVGH…RKPQRNPTKG (214 aa)). 3 disulfide bridges follow: Cys37–Cys108, Cys49–Cys60, and Cys55–Cys107. A disordered region spans residues 129–177 (PEIPTSPPTRPTTTRPTTTRPTTISTRSTHVPTSTRVSTSTPTPEQTQT). Residues 139-175 (PTTTRPTTTRPTTISTRSTHVPTSTRVSTSTPTPEQT) show a composition bias toward low complexity. N-linked (GlcNAc...) asparagine glycosylation occurs at Asn206. A helical membrane pass occupies residues 236–256 (FYVGMSVAALLLLLLASTVVV). Residues 257–307 (TRYIIIRKKMGSLSFVAFHVSKSRALQNAAIVHPRAEDNIYIIEDRSRGAE) lie on the Cytoplasmic side of the membrane.

It belongs to the immunoglobulin superfamily. TIM family. In terms of assembly, interacts with STAM. Interacts with SELPLG. As to expression, expressed at a low level in normal kidney but are increased dramatically in postischemic kidney. Expressed in proliferating bromodeoxyuridine-positive and dedifferentiated vimentin-positive epithelial cells in regenerating proximal tubules.

It is found in the cell membrane. Phosphatidylserine receptor that plays an important functional role in regulatory B-cells homeostasis including generation, expansion and suppressor functions. As P-selectin/SELPLG ligand, plays a specialized role in activated but not naive T-cell trafficking during inflammatory responses. Controls thereby T-cell accumulation in the inflamed central nervous system (CNS) and the induction of autoimmune disease. Also regulates expression of various anti-inflammatory cytokines and co-inhibitory ligands including IL10. Acts as a regulator of T-cell proliferation. May play a role in kidney injury and repair. In Rattus norvegicus (Rat), this protein is Hepatitis A virus cellular receptor 1 homolog (Havcr1).